The primary structure comprises 542 residues: Glucose-6-phosphate isomerase (542 aa).

The Proton donor role is filled by glutamate 354. Active-site residues include histidine 385 and lysine 505.

Belongs to the GPI family.

The protein resides in the cytoplasm. The enzyme catalyses alpha-D-glucose 6-phosphate = beta-D-fructose 6-phosphate. The protein operates within carbohydrate biosynthesis; gluconeogenesis. It functions in the pathway carbohydrate degradation; glycolysis; D-glyceraldehyde 3-phosphate and glycerone phosphate from D-glucose: step 2/4. Functionally, catalyzes the reversible isomerization of glucose-6-phosphate to fructose-6-phosphate. This chain is Glucose-6-phosphate isomerase, found in Nitrosospira multiformis (strain ATCC 25196 / NCIMB 11849 / C 71).